The primary structure comprises 274 residues: Hydroxyacylglutathione hydrolase, cytoplasmic isozyme (274 aa).

Zn(2+) is bound by residues His59, His61, Asp63, His64, His121, and Asp144. Substrate-binding positions include Arg153 and His188–Tyr190. His188 is a Zn(2+) binding site. Ser257 bears the Phosphoserine mark. Arg268 to Lys271 contributes to the substrate binding site.

This sequence belongs to the metallo-beta-lactamase superfamily. Glyoxalase II family. Zn(2+) serves as cofactor.

The protein localises to the cytoplasm. The enzyme catalyses an S-(2-hydroxyacyl)glutathione + H2O = a 2-hydroxy carboxylate + glutathione + H(+). It carries out the reaction (R)-S-lactoylglutathione + H2O = (R)-lactate + glutathione + H(+). The protein operates within secondary metabolite metabolism; methylglyoxal degradation; (R)-lactate from methylglyoxal: step 2/2. With respect to regulation, inhibited by various thiol compounds such as glutathione and coenzyme A. In terms of biological role, thiolesterase that catalyzes the hydrolysis of S-D-lactoylglutathione to form glutathione and D-lactic acid. Involved in the metabolism of methylglyoxal, a toxic compound for yeast proliferation, by converting methylglyoxal to lactate via S-D-lactoylglutathione by sequential enzyme reactions catalyzed by glyoxalase I and glyoxalase II. This Saccharomyces cerevisiae (strain ATCC 204508 / S288c) (Baker's yeast) protein is Hydroxyacylglutathione hydrolase, cytoplasmic isozyme.